Here is a 309-residue protein sequence, read N- to C-terminus: Caspase-7 (309 aa).

Residues 1–24 (MSGDQHADRSSGEKSNGDQDDTVD) constitute a propeptide, N-terminally processed. Basic and acidic residues predominate over residues 1-31 (MSGDQHADRSSGEKSNGDQDDTVDAKPDRSS). Positions 1–53 (MSGDQHADRSSGEKSNGDQDDTVDAKPDRSSRLSLFAKKKKNGEEEQPKSSLS) are disordered. The tract at residues 39 to 42 (KKKN) is exosite. Residues 81 to 92 (KNFEDKTGMGTR) are loop L1. Residues histidine 149 and cysteine 191 contribute to the active site. Positions 192–201 (RGSEFDEGIQ) are loop L2. Positions 204–214 (SGPANDTLETD) are excised as a propeptide. The loop L3 stretch occupies residues 234–246 (VPGYYSWRNPGRG). A loop L4 region spans residues 282-296 (ESQSDDPRFSEKKQI).

This sequence belongs to the peptidase C14A family. Heterotetramer that consists of two anti-parallel arranged heterodimers, each one formed by a 20 kDa (p20) and a 11 kDa (p11) subunit. Cleavage by different proteases, such as granzyme B (GZMB), caspase-1 (CASP1), caspase-8 (CASP8) or caspase-9 (CASP9) generate the two active subunits. Its involvement in different programmed cell death processes is probably specified by the protease that activates CASP7. Cleaved and activated by initiator caspases (CASP8 and/or CASP9), leading to execution phase of apoptosis. Cleavage and maturation by GZMB regulates granzyme-mediated programmed cell death. Cleaved and activated by CASP1 in response to bacterial infection.

Its subcellular location is the cytoplasm. The protein resides in the cytosol. It is found in the nucleus. It localises to the secreted. The protein localises to the extracellular space. The catalysed reaction is Strict requirement for an Asp residue at position P1 and has a preferred cleavage sequence of Asp-Glu-Val-Asp-|-.. With respect to regulation, during activation, the N-terminal disordered prodomain is removed by cleavage. Concomitantly, double cleavage gives rise to a large Caspase-7 subunit p20 and a small Caspase-7 subunit p11. The two large and two small subunits then assemble to form the active CASP7 complex. Can be cleaved and activated by different caspases, depending on the context. Cleaved and activated by initiator caspases (CASP8 and/or CASP9), leading to execution phase of apoptosis. Cleavage and maturation by GZMB regulates granzyme-mediated programmed cell death. Cleavage and maturation by CASP1 regulates pyroptosis. Inhibited by BIRC6; following inhibition of BIRC6-caspase binding by DIABLO/SMAC, BIRC6 is subjected to caspase cleavage, leading to an increase in active caspases. Thiol protease involved in different programmed cell death processes, such as apoptosis, pyroptosis or granzyme-mediated programmed cell death, by proteolytically cleaving target proteins. Has a marked preference for Asp-Glu-Val-Asp (DEVD) consensus sequences, with some plasticity for alternate non-canonical sequences. Its involvement in the different programmed cell death processes is probably determined by upstream proteases that activate CASP7. Acts as an effector caspase involved in the execution phase of apoptosis: following cleavage and activation by initiator caspases (CASP8 and/or CASP9), mediates execution of apoptosis by catalyzing cleavage of proteins. Compared to CASP3, acts as a minor executioner caspase and cleaves a limited set of target proteins. Acts as a key regulator of the inflammatory response in response to bacterial infection by catalyzing cleavage and activation of the sphingomyelin phosphodiesterase SMPD1 in the extracellular milieu, thereby promoting membrane repair. Cleaves BIRC6 following inhibition of BIRC6-caspase binding by DIABLO/SMAC. In Gallus gallus (Chicken), this protein is Caspase-7.